Reading from the N-terminus, the 838-residue chain is Translation initiation factor IF-2 (838 aa).

The segment at 1-235 is disordered; that stretch reads MSDTDGKKPL…RSLAAMKREQ (235 aa). Over residues 18–27 the composition is skewed to polar residues; it reads SGQVKQSFSH. Low complexity predominate over residues 50-60; sequence SGSSTTTSSPS. Residues 88–156 show a composition bias toward basic and acidic residues; that stretch reads KLREVDDAKR…AARRAEEAKR (69 aa). Residues 162-177 are compositionally biased toward low complexity; sequence PAAAQPDAADSRASAP. Positions 187 to 208 are enriched in basic and acidic residues; it reads SRKEREREADRDRTTKKDDSRR. One can recognise a tr-type G domain in the interval 335-509; sequence PRPPIITIMG…ELLDLRANPK (175 aa). The G1 stretch occupies residues 344–351; sequence GHVDHGKT. 344-351 serves as a coordination point for GTP; it reads GHVDHGKT. The segment at 369-373 is G2; it reads GITQH. Residues 391-394 are G3; that stretch reads DTPG. Residues 391–395 and 445–448 each bind GTP; these read DTPGH and NKID. Residues 445-448 are G4; the sequence is NKID. A G5 region spans residues 481–483; that stretch reads SAK.

It belongs to the TRAFAC class translation factor GTPase superfamily. Classic translation factor GTPase family. IF-2 subfamily.

It localises to the cytoplasm. One of the essential components for the initiation of protein synthesis. Protects formylmethionyl-tRNA from spontaneous hydrolysis and promotes its binding to the 30S ribosomal subunits. Also involved in the hydrolysis of GTP during the formation of the 70S ribosomal complex. The polypeptide is Translation initiation factor IF-2 (Cereibacter sphaeroides (strain ATCC 17025 / ATH 2.4.3) (Rhodobacter sphaeroides)).